Reading from the N-terminus, the 114-residue chain is Large ribosomal subunit protein bL19 (114 aa).

Belongs to the bacterial ribosomal protein bL19 family.

In terms of biological role, this protein is located at the 30S-50S ribosomal subunit interface and may play a role in the structure and function of the aminoacyl-tRNA binding site. In Listeria innocua serovar 6a (strain ATCC BAA-680 / CLIP 11262), this protein is Large ribosomal subunit protein bL19 (rplS).